The sequence spans 111 residues: Cell cycle protein GpsB (111 aa).

Residues 38–72 (IKDYEAFHKEFDQLKQQNARLKRELEEQKVAATQV) are a coiled coil.

Belongs to the GpsB family. In terms of assembly, forms polymers through the coiled coil domains. Interacts with PBP1, MreC and EzrA.

The protein localises to the cytoplasm. Functionally, divisome component that associates with the complex late in its assembly, after the Z-ring is formed, and is dependent on DivIC and PBP2B for its recruitment to the divisome. Together with EzrA, is a key component of the system that regulates PBP1 localization during cell cycle progression. Its main role could be the removal of PBP1 from the cell pole after pole maturation is completed. Also contributes to the recruitment of PBP1 to the division complex. Not essential for septum formation. The chain is Cell cycle protein GpsB from Bacillus mycoides (strain KBAB4) (Bacillus weihenstephanensis).